The following is a 788-amino-acid chain: Glycerol-3-phosphate acyltransferase (788 aa).

Positions leucine 104 to glutamate 135 are disordered. The HXXXXD motif signature appears at serine 271 to isoleucine 276.

It belongs to the GPAT/DAPAT family.

The protein localises to the cell membrane. It carries out the reaction sn-glycerol 3-phosphate + an acyl-CoA = a 1-acyl-sn-glycero-3-phosphate + CoA. The protein operates within phospholipid metabolism; CDP-diacylglycerol biosynthesis; CDP-diacylglycerol from sn-glycerol 3-phosphate: step 1/3. This is Glycerol-3-phosphate acyltransferase from Mycobacterium marinum (strain ATCC BAA-535 / M).